The chain runs to 370 residues: DNA replication and repair protein RecF (370 aa).

30–37 (GENAQGKT) lines the ATP pocket.

The protein belongs to the RecF family.

It localises to the cytoplasm. The RecF protein is involved in DNA metabolism; it is required for DNA replication and normal SOS inducibility. RecF binds preferentially to single-stranded, linear DNA. It also seems to bind ATP. This chain is DNA replication and repair protein RecF, found in Listeria welshimeri serovar 6b (strain ATCC 35897 / DSM 20650 / CCUG 15529 / CIP 8149 / NCTC 11857 / SLCC 5334 / V8).